A 247-amino-acid polypeptide reads, in one-letter code: Enolase-phosphatase E1 (247 aa).

The protein belongs to the HAD-like hydrolase superfamily. MasA/MtnC family. As to quaternary structure, monomer. It depends on Mg(2+) as a cofactor.

It catalyses the reaction 5-methylsulfanyl-2,3-dioxopentyl phosphate + H2O = 1,2-dihydroxy-5-(methylsulfanyl)pent-1-en-3-one + phosphate. The protein operates within amino-acid biosynthesis; L-methionine biosynthesis via salvage pathway; L-methionine from S-methyl-5-thio-alpha-D-ribose 1-phosphate: step 3/6. Its pathway is amino-acid biosynthesis; L-methionine biosynthesis via salvage pathway; L-methionine from S-methyl-5-thio-alpha-D-ribose 1-phosphate: step 4/6. Its function is as follows. Bifunctional enzyme that catalyzes the enolization of 2,3-diketo-5-methylthiopentyl-1-phosphate (DK-MTP-1-P) into the intermediate 2-hydroxy-3-keto-5-methylthiopentenyl-1-phosphate (HK-MTPenyl-1-P), which is then dephosphorylated to form the acireductone 1,2-dihydroxy-3-keto-5-methylthiopentene (DHK-MTPene). The protein is Enolase-phosphatase E1 of Leptospira biflexa serovar Patoc (strain Patoc 1 / Ames).